The sequence spans 269 residues: Chromosome-partitioning protein Spo0J (269 aa).

The tract at residues 1–20 is stimulates ATPase activity of Soj by 8%; sequence MSRKPSGLGRGLEALLPKTG. Residues 137–156 constitute a DNA-binding region (H-T-H motif); it reads QEEVARRVGKARSTVANALR. Positions 223–269 are required for DNA-binding; may be responsible for dimerization; the sequence is PSPLSLELSRHLGLPVRVVGGKKGKVVIQYRSLEELEALLRRLGYQA.

This sequence belongs to the ParB family. In terms of assembly, homodimer, probably via the C-terminal 46 residues. Dimerization of the N-terminal H-T-H region may require DNA-binding. Probably interacts with ATPase Soj.

Probably involved in chromosome partitioning. Binds to a plasmid centromere-like site parS. Stimulates the ATPase activity 10-fold of Soj; the first 20 residues may be responsible. This chain is Chromosome-partitioning protein Spo0J (spo0C), found in Thermus thermophilus (strain ATCC BAA-163 / DSM 7039 / HB27).